The sequence spans 113 residues: Hydrogenase maturation factor HybF (113 aa).

Residues histidine 2 and glutamate 3 each contribute to the Ni(2+) site. Residues cysteine 73, cysteine 76, cysteine 89, and cysteine 92 each contribute to the Zn(2+) site.

It belongs to the HypA/HybF family. HybF subfamily.

In terms of biological role, involved in the maturation of [NiFe] hydrogenases. Required for nickel insertion into the metal center of the hydrogenase. The chain is Hydrogenase maturation factor HybF from Salmonella typhi.